The sequence spans 503 residues: Aromatase (503 aa).

2 helical membrane-spanning segments follow: residues 19–39 (EVVP…LLVW) and 53–73 (FLGI…IGSA). Residues Asp309 and Met374 each coordinate substrate. Cys437 provides a ligand contact to heme.

Belongs to the cytochrome P450 family. Requires heme as cofactor.

It is found in the endoplasmic reticulum membrane. The protein resides in the microsome membrane. The enzyme catalyses testosterone + 3 reduced [NADPH--hemoprotein reductase] + 3 O2 = 17beta-estradiol + formate + 3 oxidized [NADPH--hemoprotein reductase] + 4 H2O + 4 H(+). The catalysed reaction is androst-4-ene-3,17-dione + 3 reduced [NADPH--hemoprotein reductase] + 3 O2 = estrone + formate + 3 oxidized [NADPH--hemoprotein reductase] + 4 H2O + 4 H(+). It carries out the reaction androst-4-ene-3,17-dione + reduced [NADPH--hemoprotein reductase] + O2 = 19-hydroxyandrost-4-ene-3,17-dione + oxidized [NADPH--hemoprotein reductase] + H2O + H(+). It catalyses the reaction 19-hydroxyandrost-4-ene-3,17-dione + reduced [NADPH--hemoprotein reductase] + O2 = 19-oxo-androst-4-ene-3,17-dione + oxidized [NADPH--hemoprotein reductase] + 2 H2O + H(+). The enzyme catalyses 19-oxo-androst-4-ene-3,17-dione + reduced [NADPH--hemoprotein reductase] + O2 = estrone + formate + oxidized [NADPH--hemoprotein reductase] + H2O + 2 H(+). The catalysed reaction is estrone + reduced [NADPH--hemoprotein reductase] + O2 = 2-hydroxyestrone + oxidized [NADPH--hemoprotein reductase] + H2O + H(+). It carries out the reaction 17beta-hydroxy-5alpha-androstan-3-one + reduced [NADPH--hemoprotein reductase] + O2 = 17beta,19-dihydroxy-3-oxo-5alpha-androstanone + oxidized [NADPH--hemoprotein reductase] + H2O + H(+). It catalyses the reaction 17beta,19-dihydroxy-3-oxo-5alpha-androstanone + reduced [NADPH--hemoprotein reductase] + O2 = 17beta-hydroxy-3,19-dioxo-5alpha-androstanone + oxidized [NADPH--hemoprotein reductase] + 2 H2O + H(+). The enzyme catalyses 17beta-hydroxy-3,19-dioxo-5alpha-androstanone + reduced [NADPH--hemoprotein reductase] + O2 = 17beta-hydroxy-3-oxo-19-nor-5alpha-androst-1-ene + formate + oxidized [NADPH--hemoprotein reductase] + H2O + 2 H(+). The protein operates within steroid hormone biosynthesis. Functionally, a cytochrome P450 monooxygenase that catalyzes the conversion of C19 androgens, androst-4-ene-3,17-dione (androstenedione) and testosterone to the C18 estrogens, estrone and estradiol, respectively. Catalyzes three successive oxidations of C19 androgens: two conventional oxidations at C19 yielding 19-hydroxy and 19-oxo/19-aldehyde derivatives, followed by a third oxidative aromatization step that involves C1-beta hydrogen abstraction combined with cleavage of the C10-C19 bond to yield a phenolic A ring and formic acid. Alternatively, the third oxidative reaction yields a 19-norsteroid and formic acid. Converts dihydrotestosterone to delta1,10-dehydro 19-nordihydrotestosterone and may play a role in homeostasis of this potent androgen. Also displays 2-hydroxylase activity toward estrone. Mechanistically, uses molecular oxygen inserting one oxygen atom into a substrate, and reducing the second into a water molecule, with two electrons provided by NADPH via cytochrome P450 reductase (CPR; NADPH-ferrihemoprotein reductase). The sequence is that of Aromatase (CYP19A1) from Bos taurus (Bovine).